The sequence spans 474 residues: tRNA-2-methylthio-N(6)-dimethylallyladenosine synthase (474 aa).

The 118-residue stretch at 3 to 120 (KKLHIKTWGC…LPEMINSVRG (118 aa)) folds into the MTTase N-terminal domain. [4Fe-4S] cluster contacts are provided by Cys12, Cys49, Cys83, Cys157, Cys161, and Cys164. The region spanning 143-375 (RAEGPTAFVS…QERINQQAMA (233 aa)) is the Radical SAM core domain. One can recognise a TRAM domain in the interval 378-441 (RRMLGTTQRI…PNSLRGKVVR (64 aa)).

It belongs to the methylthiotransferase family. MiaB subfamily. In terms of assembly, monomer. Requires [4Fe-4S] cluster as cofactor.

The protein resides in the cytoplasm. It catalyses the reaction N(6)-dimethylallyladenosine(37) in tRNA + (sulfur carrier)-SH + AH2 + 2 S-adenosyl-L-methionine = 2-methylsulfanyl-N(6)-dimethylallyladenosine(37) in tRNA + (sulfur carrier)-H + 5'-deoxyadenosine + L-methionine + A + S-adenosyl-L-homocysteine + 2 H(+). In terms of biological role, catalyzes the methylthiolation of N6-(dimethylallyl)adenosine (i(6)A), leading to the formation of 2-methylthio-N6-(dimethylallyl)adenosine (ms(2)i(6)A) at position 37 in tRNAs that read codons beginning with uridine. The chain is tRNA-2-methylthio-N(6)-dimethylallyladenosine synthase from Escherichia coli (strain SMS-3-5 / SECEC).